The chain runs to 121 residues: Surface glycoprotein CD59 homolog (121 aa).

Positions 1-19 (MYILFTLVLTFVFCKPIHS) are cleaved as a signal peptide. The 85-residue stretch at 20–104 (LQCYNCSHST…ENIKRTISDK (85 aa)) folds into the UPAR/Ly6 domain. 5 disulfides stabilise this stretch: C22–C45, C25–C32, C38–C58, C64–C82, and C83–C88. N-linked (GlcNAc...) asparagine; by host glycosylation occurs at N24. A lipid anchor (GPI-anchor amidated asparagine; by host) is attached at N96. Positions 97 to 121 (IKRTISDKALLLLALFLVTAWNFPL) are cleaved as a propeptide — removed in mature form.

Its subcellular location is the host cell membrane. This Saimiriine herpesvirus 2 (strain 11) (SaHV-2) protein is Surface glycoprotein CD59 homolog (15).